Here is a 97-residue protein sequence, read N- to C-terminus: ESAT-6-like protein EsxS (97 aa).

This sequence belongs to the WXG100 family. CFP-10 subfamily. As to quaternary structure, forms a tight complex with EsxR. Exists in heterodimeric and heterotetrameric forms.

It localises to the secreted. The polypeptide is ESAT-6-like protein EsxS (Mycobacterium tuberculosis (strain ATCC 25618 / H37Rv)).